A 425-amino-acid polypeptide reads, in one-letter code: Adenylosuccinate synthetase (425 aa).

Residues 12 to 18 (GDEGKGK) and 40 to 42 (GHT) each bind GTP. The active-site Proton acceptor is the Asp-13. Residues Asp-13 and Gly-40 each coordinate Mg(2+). IMP is bound by residues 13-16 (DEGK), 38-41 (NAGH), Thr-127, Arg-141, Gln-222, Thr-237, and Arg-301. His-41 acts as the Proton donor in catalysis. 297–303 (AVTGRPR) contributes to the substrate binding site. Residues Arg-303, 329–331 (KID), and 411–413 (SVG) contribute to the GTP site.

The protein belongs to the adenylosuccinate synthetase family. As to quaternary structure, homodimer. The cofactor is Mg(2+).

The protein resides in the cytoplasm. The enzyme catalyses IMP + L-aspartate + GTP = N(6)-(1,2-dicarboxyethyl)-AMP + GDP + phosphate + 2 H(+). It functions in the pathway purine metabolism; AMP biosynthesis via de novo pathway; AMP from IMP: step 1/2. In terms of biological role, plays an important role in the de novo pathway of purine nucleotide biosynthesis. Catalyzes the first committed step in the biosynthesis of AMP from IMP. The protein is Adenylosuccinate synthetase of Fusobacterium nucleatum subsp. nucleatum (strain ATCC 25586 / DSM 15643 / BCRC 10681 / CIP 101130 / JCM 8532 / KCTC 2640 / LMG 13131 / VPI 4355).